Consider the following 249-residue polypeptide: Tetrahydromethanopterin S-methyltransferase subunit A (249 aa).

Residues 1 to 227 are Cytoplasmic-facing; sequence MADKKEVIQN…KISSGYYAGK (227 aa). His-84 lines the 5-hydroxybenzimidazolylcob(I)amide pocket. The chain crosses the membrane as a helical span at residues 228–248; that stretch reads IEGIVIGFILTLVFLIIIIQG. A topological domain (extracellular) is located at residue Leu-249.

Belongs to the MtrA family. The complex is composed of 8 subunits; MtrA, MtrB, MtrC, MtrD, MtrE, MtrF, MtrG and MtrH. It depends on 5-hydroxybenzimidazolylcob(I)amide as a cofactor.

Its subcellular location is the cell membrane. It catalyses the reaction 5-methyl-5,6,7,8-tetrahydromethanopterin + coenzyme M + 2 Na(+)(in) = 5,6,7,8-tetrahydromethanopterin + methyl-coenzyme M + 2 Na(+)(out). Its pathway is one-carbon metabolism; methanogenesis from CO(2); methyl-coenzyme M from 5,10-methylene-5,6,7,8-tetrahydromethanopterin: step 2/2. Functionally, part of a complex that catalyzes the formation of methyl-coenzyme M and tetrahydromethanopterin from coenzyme M and methyl-tetrahydromethanopterin. This is an energy-conserving, sodium-ion translocating step. The chain is Tetrahydromethanopterin S-methyltransferase subunit A from Methanosphaera stadtmanae (strain ATCC 43021 / DSM 3091 / JCM 11832 / MCB-3).